The chain runs to 65 residues: Large ribosomal subunit protein uL29 (65 aa).

The protein belongs to the universal ribosomal protein uL29 family.

In Lactobacillus acidophilus (strain ATCC 700396 / NCK56 / N2 / NCFM), this protein is Large ribosomal subunit protein uL29.